A 305-amino-acid polypeptide reads, in one-letter code: Probable xyloglucan endotransglucosylase/hydrolase protein 21 (305 aa).

Residues 1-25 (MVSSTLLVMSISLFLGLSILLVVHG) form the signal peptide. A GH16 domain is found at 26 to 216 (KDFNQDIDIT…WSQGPFVASF (191 aa)). N46 carries an N-linked (GlcNAc...) asparagine glycan. Catalysis depends on E102, which acts as the Nucleophile. Catalysis depends on E106, which acts as the Proton donor. Xyloglucan is bound at residue E106. An N-linked (GlcNAc...) asparagine glycan is attached at N110. Residues 119–121 (HTN) and 129–131 (DRE) contribute to the xyloglucan site. N146 carries N-linked (GlcNAc...) asparagine glycosylation. Xyloglucan is bound by residues 195–196 (DW) and G200. N206 and N231 each carry an N-linked (GlcNAc...) asparagine glycan. 2 disulfides stabilise this stretch: C225–C239 and C282–C296. Residues 236–253 (TSPCSPGDSTSSSSSSTS) show a composition bias toward low complexity. The segment at 236-258 (TSPCSPGDSTSSSSSSTSEWFSQ) is disordered. R287 provides a ligand contact to xyloglucan.

It belongs to the glycosyl hydrolase 16 family. XTH group 2 subfamily. Contains at least one intrachain disulfide bond essential for its enzymatic activity. As to expression, predominantly expressed in green siliques.

The protein localises to the secreted. The protein resides in the cell wall. It localises to the extracellular space. It is found in the apoplast. It carries out the reaction breaks a beta-(1-&gt;4) bond in the backbone of a xyloglucan and transfers the xyloglucanyl segment on to O-4 of the non-reducing terminal glucose residue of an acceptor, which can be a xyloglucan or an oligosaccharide of xyloglucan.. In terms of biological role, catalyzes xyloglucan endohydrolysis (XEH) and/or endotransglycosylation (XET). Cleaves and religates xyloglucan polymers, an essential constituent of the primary cell wall, and thereby participates in cell wall construction of growing tissues. The sequence is that of Probable xyloglucan endotransglucosylase/hydrolase protein 21 (XTH21) from Arabidopsis thaliana (Mouse-ear cress).